The sequence spans 441 residues: uncharacterized protein (441 aa).

Transmembrane regions (helical) follow at residues 62-82 (FLSLGFFLVIIVLVGIAFEIG), 88-108 (LILTLALEVYFFSTALLKLFG), 112-132 (IALTLHFFEPLLVFILLIIAL), 154-174 (ALLHFTPLFNLLEGMASLLVV), 192-212 (WMFFILLNASSAISMSLYLLY), 224-244 (ALMIGFSLATVIVISIYGVAS), 247-267 (ANLSEASLMFLYIAYTVYMVC), 312-332 (IVLFMVAAAKTVAPSVFATFA), 335-355 (ISVMYAVTRILPAIQNNIIFL), 363-383 (QGMWSILSPCILIAVYTNLLL), and 399-419 (ILCSAEIWRWVSAILTLLLYA).

The protein localises to the membrane. This is an uncharacterized protein from Schizosaccharomyces pombe (strain 972 / ATCC 24843) (Fission yeast).